A 435-amino-acid chain; its full sequence is Tol-Pal system protein TolB (435 aa).

Positions 1-28 (MVKCSLIRALMVIAGLIGAAAFTTPANA) are cleaved as a signal peptide. The interval 288–310 (STAAIDTSPSYSPDGARVSFESD) is disordered.

This sequence belongs to the TolB family. As to quaternary structure, the Tol-Pal system is composed of five core proteins: the inner membrane proteins TolA, TolQ and TolR, the periplasmic protein TolB and the outer membrane protein Pal. They form a network linking the inner and outer membranes and the peptidoglycan layer.

The protein resides in the periplasm. Part of the Tol-Pal system, which plays a role in outer membrane invagination during cell division and is important for maintaining outer membrane integrity. The protein is Tol-Pal system protein TolB of Rhizobium leguminosarum bv. trifolii (strain WSM2304).